The sequence spans 71 residues: Small ribosomal subunit protein bS21 (71 aa).

Residues 47–71 form a disordered region; that stretch reads RENATRAKRHAKRVARENARNTRLY. The segment covering 60 to 71 has biased composition (basic and acidic residues); that stretch reads VARENARNTRLY.

It belongs to the bacterial ribosomal protein bS21 family.

This is Small ribosomal subunit protein bS21 from Histophilus somni (strain 129Pt) (Haemophilus somnus).